Reading from the N-terminus, the 816-residue chain is Ribonucleoside-diphosphate reductase large subunit (816 aa).

One can recognise an ATP-cone domain in the interval 1–92; sequence MYVVKRDGRQ…VSNLHKNTKK (92 aa). ATP-binding positions include 5-6, 11-17, Thr53, and Asp57; these read KR and ETVHFDK. Residues Ser202 and Ser217 each contribute to the GDP site. Cys218 and Cys444 are joined by a disulfide. Residues 226 to 228, Lys243, Arg256, and 263 to 264 each bind dTTP; these read DSI and RG. Asn427 is a binding site for GDP. Asn427 (proton acceptor) is an active-site residue. Cys429 acts as the Cysteine radical intermediate in catalysis. GDP-binding positions include Glu431 and 623-626; that span reads TAST. Catalysis depends on Glu431, which acts as the Proton acceptor.

The protein belongs to the ribonucleoside diphosphate reductase large chain family. Heterotetramer of two large/R1 and two small/R2 subunits. A radical transfer pathway may occur between 'Tyr-125' of protein R2 and R1. In terms of processing, contains a disulfide bonds. Binding of the substrate occurs primarily when the active-site cysteines are reduced. As to expression, highly expressed in actively growing tissues such as young leaves, shoot apices, inflorescences and carpels. Very low expression in cotyledons, adult and cauline leaves and senescent leaves.

It localises to the cytoplasm. The catalysed reaction is a 2'-deoxyribonucleoside 5'-diphosphate + [thioredoxin]-disulfide + H2O = a ribonucleoside 5'-diphosphate + [thioredoxin]-dithiol. With respect to regulation, under complex allosteric control mediated by deoxynucleoside triphosphates and ATP binding to separate specificity and activation sites on the large subunit. The type of nucleotide bound at the specificity site determines substrate preference. It seems probable that ATP makes the enzyme reduce CDP and UDP, dGTP favors ADP reduction and dTTP favors GDP reduction. Stimulated by ATP and inhibited by dATP binding to the activity site. Functionally, provides the precursors necessary for DNA synthesis. Catalyzes the biosynthesis of deoxyribonucleotides from the corresponding ribonucleotides. R1 contains the binding sites for both substrates and allosteric effectors and carries out the actual reduction of the ribonucleotide. Ribonucleotide reductase (RNR) complex function is essential for efficient organellar DNA degradation in pollen. Involved in chloroplast division. The protein is Ribonucleoside-diphosphate reductase large subunit of Arabidopsis thaliana (Mouse-ear cress).